We begin with the raw amino-acid sequence, 238 residues long: Partner of Y14 and mago (238 aa).

A disordered region spans residues 1 to 183; it reads MTTYATDSQG…GADGHSDLSK (183 aa). Composition is skewed to basic and acidic residues over residues 65-77 and 123-133; these read QKAR…EQRK and LEQKQKEEQKA. Over residues 136 to 155 the composition is skewed to low complexity; the sequence is RQQAQDQRNSKQQQSQNQSK. Positions 176-233 form a coiled coil; that stretch reads DGHSDLSKKLRKLRKKIREIEVIEERLRASDGPRPDKDQIEKAKRKAEILKEIEELER.

It belongs to the pym family. Interacts (via N-terminus) with mago and tsu/Y14; the interaction is direct.

It is found in the cytoplasm. The protein resides in the nucleus. Its function is as follows. Regulator of the exon junction complex (EJC), a multiprotein complex that associates immediately upstream of the exon-exon junction on mRNAs and serves as a positional landmarks for the intron exon structure of genes and directs post-transcriptional processes in the cytoplasm such as mRNA export, nonsense-mediated mRNA decay (NMD) or translation. The sequence is that of Partner of Y14 and mago from Culex quinquefasciatus (Southern house mosquito).